A 379-amino-acid chain; its full sequence is Fimbrium subunit Fim1C (379 aa).

The signal sequence occupies residues 1 to 17 (MEVKSLLMVMATLTIAG). Cys-18 is lipidated: N-palmitoyl cysteine. Cys-18 carries S-diacylglycerol cysteine lipidation. Residues 18–45 (CSQNEMTEMNPDTNRTIGLDVYTEVQTR) constitute a propeptide that is removed on maturation.

Belongs to the bacteroidetes fimbrillin superfamily. Mfa-like family. In terms of assembly, may be part of the fimbrial tip.

It is found in the fimbrium. The protein resides in the cell outer membrane. Probably a component of the fimbrium tip. Fimbriae are filamentous appendages on the cell surface that mediate cell adhesion and biofilm formation. The sequence is that of Fimbrium subunit Fim1C (fim1C) from Phocaeicola vulgatus (strain ATCC 8482 / DSM 1447 / JCM 5826 / CCUG 4940 / NBRC 14291 / NCTC 11154) (Bacteroides vulgatus).